The sequence spans 356 residues: Rhomboid-related protein 1 (356 aa).

7 consecutive transmembrane segments (helical) span residues 107–129 (WCPP…FFYW), 172–194 (YMFL…LVGI), 201–223 (KIWR…QYAI), 227–249 (SLLV…NVIL), 256–275 (LRWI…FGGA), 290–312 (HLAH…YNVV), and 319–341 (IIRY…FVIV). The active-site Nucleophile is the serine 233. The active site involves histidine 293.

This sequence belongs to the peptidase S54 family.

The protein localises to the membrane. It catalyses the reaction Cleaves type-1 transmembrane domains using a catalytic dyad composed of serine and histidine that are contributed by different transmembrane domains.. Serine protease which activates lin-3 isoform a in the proximal vulva precursor cells (VPC) during vulva development to transmit the inductive anchor cell signal to the distal VPCs. This chain is Rhomboid-related protein 1, found in Caenorhabditis elegans.